Consider the following 229-residue polypeptide: Prolactin (229 aa).

An N-terminal signal peptide occupies residues 1 to 30 (MDSKGSAQKGSRLLLLLVVSNLLLCQGVVS). Cys34 and Cys41 are oxidised to a cystine. A phosphoserine mark is found at Ser56, Ser64, and Ser120. 2 cysteine pairs are disulfide-bonded: Cys88–Cys204 and Cys221–Cys229.

Belongs to the somatotropin/prolactin family. As to quaternary structure, interacts with PRLR.

The protein resides in the secreted. Its function is as follows. Prolactin acts primarily on the mammary gland by promoting lactation. The polypeptide is Prolactin (PRL) (Capra hircus (Goat)).